A 352-amino-acid polypeptide reads, in one-letter code: D-alanine--D-alanine ligase (352 aa).

One can recognise an ATP-grasp domain in the interval 133–342; the sequence is KTVFAAAGLP…FPKLVDRLIQ (210 aa). 169-224 is a binding site for ATP; the sequence is DETIGYPNFVKPANLGSSVGISKVRSRLELEAALDSAASFDRRIVVEAGVVAREVE. Mg(2+) is bound by residues aspartate 295, glutamate 309, and asparagine 311.

Belongs to the D-alanine--D-alanine ligase family. Mg(2+) is required as a cofactor. Requires Mn(2+) as cofactor.

It localises to the cytoplasm. The catalysed reaction is 2 D-alanine + ATP = D-alanyl-D-alanine + ADP + phosphate + H(+). It functions in the pathway cell wall biogenesis; peptidoglycan biosynthesis. Its function is as follows. Cell wall formation. This Acaryochloris marina (strain MBIC 11017) protein is D-alanine--D-alanine ligase.